Consider the following 731-residue polypeptide: Alpha-1,4-glucan:maltose-1-phosphate maltosyltransferase (731 aa).

The span at 1–10 shows a compositional bias: basic and acidic residues; it reads MEAQHNETEA. The disordered stretch occupies residues 1–31; it reads MEAQHNETEAAGKPAAKKTTRTRKPRASKQA. Positions 15 to 27 are enriched in basic residues; the sequence is AAKKTTRTRKPRA. Alpha-maltose 1-phosphate is bound by residues Lys321, Gln381, and Asp416. The active-site Nucleophile is Asp451. Asn452 is an alpha-maltose 1-phosphate binding site. Glu480 (proton donor) is an active-site residue. 590 to 591 serves as a coordination point for alpha-maltose 1-phosphate; the sequence is KF.

Belongs to the glycosyl hydrolase 13 family. GlgE subfamily. In terms of assembly, homodimer.

It carries out the reaction alpha-maltose 1-phosphate + [(1-&gt;4)-alpha-D-glucosyl](n) = [(1-&gt;4)-alpha-D-glucosyl](n+2) + phosphate. In terms of biological role, maltosyltransferase that uses maltose 1-phosphate (M1P) as the sugar donor to elongate linear or branched alpha-(1-&gt;4)-glucans. Is involved in a branched alpha-glucan biosynthetic pathway from trehalose, together with TreS, Mak and GlgB. This Bifidobacterium animalis subsp. lactis (strain Bl-04 / DGCC2908 / RB 4825 / SD5219) protein is Alpha-1,4-glucan:maltose-1-phosphate maltosyltransferase.